A 712-amino-acid polypeptide reads, in one-letter code: Lactoperoxidase (712 aa).

An N-terminal signal peptide occupies residues 1-21; sequence MLVCLHLQVFLASVALFEVAA. The propeptide occupies 22–117; sequence SDTIAQAAST…TDPSLDLTAL (96 aa). N106 carries N-linked (GlcNAc...) (complex) asparagine; alternate glycosylation. The N-linked (GlcNAc...) (hybrid) asparagine; alternate glycan is linked to N106. 4 cysteine pairs are disulfide-bonded: C123–C284, C132–C145, C246–C256, and C250–C274. N212 carries N-linked (GlcNAc...) (complex) asparagine; alternate glycosylation. N-linked (GlcNAc...) (hybrid) asparagine; alternate glycosylation occurs at N212. Residue D225 participates in heme b binding. H226 serves as the catalytic Proton acceptor. D227 provides a ligand contact to Ca(2+). T301, F303, D305, and S307 together coordinate Ca(2+). S315 is modified (phosphoserine). A glycan (N-linked (GlcNAc...) (high mannose) asparagine) is linked at N322. A disulfide bond links C354 and C365. N358 carries an N-linked (GlcNAc...) asparagine glycan. Residue E375 coordinates heme b. The N-linked (GlcNAc...) (complex) asparagine; alternate glycan is linked to N449. N449 carries N-linked (GlcNAc...) (hybrid) asparagine; alternate glycosylation. N449 carries N-linked (GlcNAc...) (high mannose) asparagine; alternate glycosylation. H468 lines the heme b pocket. 3'-nitrotyrosine is present on Y482. Intrachain disulfides connect C573/C630 and C671/C696.

The protein belongs to the peroxidase family. XPO subfamily. The cofactor is Ca(2+). Heme b serves as cofactor. As to expression, mammary gland; milk.

The protein localises to the secreted. It is found in the cytoplasm. It carries out the reaction 2 a phenolic donor + H2O2 = 2 a phenolic radical donor + 2 H2O. It catalyses the reaction thiocyanate + H2O2 + H(+) = hypothiocyanous acid + H2O. The enzyme catalyses iodide + H2O2 = hypoiodite + H2O. Its activity is regulated as follows. Inhibited by small molecule methimazole (MMZ). Heme-containing oxidoreductase which catalyzes the conversion of thiocyanate (SCN(-)) into antimicrobial agent hypothiocyanous acid (OSCN(-)) in the presence of hydrogen peroxide (H2O2). Also involved in the conversion of iodide (I(-)) into hypoiodite (IO(-)) in the presence of H2O2. Responsible for the inactivation of a wide range of micro-organisms and hence, important component of defense mechanism. Shows antibacterial properties against several Gram-positive bacteria including some Staphylococcus species and Gram-negative bacteria including E.coli, P.aeruginosa and some Salmonella species. Inhibits the growth of several fungi including A.niger, Trichoderma species, C.cassicola, P.meadii and C.salmonicolor. Does not have anti-fungal activity towards C.albicans and Pythium species. May protect the udder from infection and may promote growth in newborns. May be implicated in airway host defense against infection. May contribute to maintaining an appropriate H2O2 cellular level, therefore protecting cells from H2O2-caused injuries and inflammation. This chain is Lactoperoxidase (LPO), found in Capra hircus (Goat).